Consider the following 61-residue polypeptide: Short neurotoxin 1 (61 aa).

Disulfide bonds link C3–C23, C17–C40, C42–C53, and C54–C59.

It belongs to the three-finger toxin family. Short-chain subfamily. Type I alpha-neurotoxin sub-subfamily. Expressed by the venom gland.

The protein resides in the secreted. Its function is as follows. Binds with high affinity to muscular nicotinic acetylcholine receptors (nAChRs) (tested on Torpedo marmorata AChR, Kd=0.07 nM) and with low affinity to neuronal alpha-7/CHRNA7 nAChRs (tested on chimeric receptor, Kd=3 uM) and inhibit acetylcholine from binding to the receptor, thereby impairing neuromuscular transmission. Produces peripheral paralysis by blocking neuromuscular transmission at the postsynaptic site. This chain is Short neurotoxin 1, found in Naja pallida (Red spitting cobra).